The sequence spans 901 residues: HTH-type transcriptional regulator MalT (901 aa).

39–46 provides a ligand contact to ATP; that stretch reads SPAGYGKT. In terms of domain architecture, HTH luxR-type spans 829–894; it reads ELIRTSPLTQ…DAVQHAQQLL (66 aa). Residues 853 to 872 constitute a DNA-binding region (H-T-H motif); that stretch reads NEQIAGELDVAATTIKTHIR.

Belongs to the MalT family. As to quaternary structure, monomer in solution. Oligomerizes to an active state in the presence of the positive effectors ATP and maltotriose.

Its activity is regulated as follows. Activated by ATP and maltotriose, which are both required for DNA binding. Its function is as follows. Positively regulates the transcription of the maltose regulon whose gene products are responsible for uptake and catabolism of malto-oligosaccharides. Specifically binds to the promoter region of its target genes, recognizing a short DNA motif called the MalT box. In Klebsiella pneumoniae (strain 342), this protein is HTH-type transcriptional regulator MalT.